Here is a 338-residue protein sequence, read N- to C-terminus: Glycerol-3-phosphate dehydrogenase [NAD(P)+] (338 aa).

NADPH is bound by residues Ser-14, Tyr-15, His-35, and Lys-109. Lys-109, Gly-138, and Thr-140 together coordinate sn-glycerol 3-phosphate. Ala-142 contacts NADPH. 5 residues coordinate sn-glycerol 3-phosphate: Lys-194, Asp-247, Ser-257, Arg-258, and Asn-259. Lys-194 (proton acceptor) is an active-site residue. Arg-258 serves as a coordination point for NADPH. Residues Val-282 and Glu-284 each coordinate NADPH.

This sequence belongs to the NAD-dependent glycerol-3-phosphate dehydrogenase family.

The protein localises to the cytoplasm. The catalysed reaction is sn-glycerol 3-phosphate + NAD(+) = dihydroxyacetone phosphate + NADH + H(+). It carries out the reaction sn-glycerol 3-phosphate + NADP(+) = dihydroxyacetone phosphate + NADPH + H(+). It participates in membrane lipid metabolism; glycerophospholipid metabolism. In terms of biological role, catalyzes the reduction of the glycolytic intermediate dihydroxyacetone phosphate (DHAP) to sn-glycerol 3-phosphate (G3P), the key precursor for phospholipid synthesis. The polypeptide is Glycerol-3-phosphate dehydrogenase [NAD(P)+] (Shewanella frigidimarina (strain NCIMB 400)).